Here is a 380-residue protein sequence, read N- to C-terminus: DNA-directed RNA polymerase subunit Rpo1C (380 aa).

This sequence belongs to the RNA polymerase beta' chain family. As to quaternary structure, part of the RNA polymerase complex.

Its subcellular location is the cytoplasm. It catalyses the reaction RNA(n) + a ribonucleoside 5'-triphosphate = RNA(n+1) + diphosphate. DNA-dependent RNA polymerase (RNAP) catalyzes the transcription of DNA into RNA using the four ribonucleoside triphosphates as substrates. Forms part of the jaw domain. This is DNA-directed RNA polymerase subunit Rpo1C from Archaeoglobus fulgidus (strain ATCC 49558 / DSM 4304 / JCM 9628 / NBRC 100126 / VC-16).